A 353-amino-acid polypeptide reads, in one-letter code: S-adenosylmethionine decarboxylase proenzyme (353 aa).

Active-site residues include glutamate 9 and glutamate 12. Serine 69 functions as the Schiff-base intermediate with substrate; via pyruvic acid in the catalytic mechanism. At serine 69 the chain carries Pyruvic acid (Ser); by autocatalysis. Cysteine 83 acts as the Proton donor; for catalytic activity in catalysis. Catalysis depends on proton acceptor; for processing activity residues serine 232 and histidine 245.

The protein belongs to the eukaryotic AdoMetDC family. The cofactor is pyruvate. In terms of processing, is synthesized initially as an inactive proenzyme. Formation of the active enzyme involves a self-maturation process in which the active site pyruvoyl group is generated from an internal serine residue via an autocatalytic post-translational modification. Two non-identical subunits are generated from the proenzyme in this reaction, and the pyruvate is formed at the N-terminus of the alpha chain, which is derived from the carboxyl end of the proenzyme. The post-translation cleavage follows an unusual pathway, termed non-hydrolytic serinolysis, in which the side chain hydroxyl group of the serine supplies its oxygen atom to form the C-terminus of the beta chain, while the remainder of the serine residue undergoes an oxidative deamination to produce ammonia and the pyruvoyl group blocking the N-terminus of the alpha chain.

The enzyme catalyses S-adenosyl-L-methionine + H(+) = S-adenosyl 3-(methylsulfanyl)propylamine + CO2. The protein operates within amine and polyamine biosynthesis; S-adenosylmethioninamine biosynthesis; S-adenosylmethioninamine from S-adenosyl-L-methionine: step 1/1. This is S-adenosylmethionine decarboxylase proenzyme (SAMDC) from Pisum sativum (Garden pea).